The sequence spans 164 residues: B-phycoerythrin alpha chain (164 aa).

The (2R,3E)-phycoerythrobilin site is built by C82 and C139.

It belongs to the phycobiliprotein family. As to quaternary structure, heteromer of 6 alpha, 6 beta and one gamma chain. In terms of processing, contains two covalently linked bilin chromophores.

The protein localises to the plastid. The protein resides in the chloroplast thylakoid membrane. Light-harvesting photosynthetic bile pigment-protein from the phycobiliprotein complex. This Rhodella violacea (Red alga) protein is B-phycoerythrin alpha chain (cpeA).